The chain runs to 624 residues: MPRAPFSLLALVLGLAFLAWAFSLAGTVGAPSGTVNYTTFLEDLKAGRVKEVVVRAGDTRIQGVLEDGSAFTTYAASPPDNATLEGWMARGVSVRVEPPQGQNALGFLWPLLLVGLLIGALYYFSRNGRAGPSDSAFSFTKSRARVLTEAPKVTFKDVAGAEEAKEELKEIVEFLKNPSRFHEMGARIPKGVLLVGPPGVGKTHLARAVAGEARVPFITASGSDFVEMFVGVGAARVRDLFETAKRHAPCIVFIDEIDAVGRKRGSGVGGGNDEREQTLNQLLVEMDGFEKDTAIVVMAATNRPDILDPALLRPGRFDRQIAIDAPDVKGREQILRIHARGKPLAEDVDLALLAKRTPGFVGADLENLLNEAALLAAREGRRKITMKDLEEAADRVMMGPAKKSLVLSPRDRRITAYHEAGHALAAHFLEHADGVHKVTIVPRGRALGFMMPRREDMLHWSRKRLLDQIAVALAGRAAEEIVFDDVTTGAENDFRQATELARRMITEWGMHPEFGPVAYAVREDTYLGGYDVRQYSEETAKRIDEAVRRLIEEQYQRVKALLLEKREVLERVAETLLERETLTAEEFQRVVEGLPLEAPEEAREEREPPRVVPKVKPGGALGGA.

At 1–7 (MPRAPFS) the chain is on the cytoplasmic side. The chain crosses the membrane as a helical span at residues 8-28 (LLALVLGLAFLAWAFSLAGTV). Residues 29-103 (GAPSGTVNYT…VRVEPPQGQN (75 aa)) are Periplasmic-facing. Residues 104-124 (ALGFLWPLLLVGLLIGALYYF) traverse the membrane as a helical segment. The Cytoplasmic portion of the chain corresponds to 125–624 (SRNGRAGPSD…VKPGGALGGA (500 aa)). Residues A159, 199–203 (GVGKT), and H204 each bind ATP. Residue H418 participates in Zn(2+) binding. E419 is a catalytic residue. 2 residues coordinate Zn(2+): H422 and D493. Positions 595–624 (PLEAPEEAREEREPPRVVPKVKPGGALGGA) are disordered. A compositionally biased stretch (basic and acidic residues) spans 600–609 (EEAREEREPP).

In the central section; belongs to the AAA ATPase family. This sequence in the C-terminal section; belongs to the peptidase M41 family. The isolated soluble domain (residues 126-624) forms a stable hexamer in which the AAA+ domains (residues 126-400) are alternatively open or closed. Requires Zn(2+) as cofactor.

Its subcellular location is the cell inner membrane. Its activity is regulated as follows. The proteolytic activity is dependent on ATP, both the ATPase and protease activities are inhibited by ADP. Functionally, acts as a processive, ATP-dependent zinc metallopeptidase for both cytoplasmic and membrane proteins. Plays a role in the quality control of integral membrane proteins. Its function is as follows. Degrades preferentially unfolded substrates in a processive, ATP-dependent manner, usually after hydrophobic residues. This Thermus thermophilus (strain ATCC 27634 / DSM 579 / HB8) protein is ATP-dependent zinc metalloprotease FtsH.